The following is a 143-amino-acid chain: Putative pre-16S rRNA nuclease (143 aa).

It belongs to the YqgF nuclease family.

The protein localises to the cytoplasm. Its function is as follows. Could be a nuclease involved in processing of the 5'-end of pre-16S rRNA. This Mesomycoplasma hyopneumoniae (strain 232) (Mycoplasma hyopneumoniae) protein is Putative pre-16S rRNA nuclease.